The chain runs to 237 residues: Cobalt-precorrin-2 C(20)-methyltransferase (237 aa).

Belongs to the precorrin methyltransferase family. Homodimer.

It carries out the reaction Co-precorrin-2 + S-adenosyl-L-methionine = Co-precorrin-3 + S-adenosyl-L-homocysteine + H(+). It participates in cofactor biosynthesis; adenosylcobalamin biosynthesis; cob(II)yrinate a,c-diamide from sirohydrochlorin (anaerobic route): step 2/10. Its function is as follows. Methylates cobalt-precorrin-2 at the C-20 position to produce cobalt-precorrin-3A in the anaerobic cobalamin biosynthesis pathway. This Salmonella typhimurium (strain LT2 / SGSC1412 / ATCC 700720) protein is Cobalt-precorrin-2 C(20)-methyltransferase (cbiL).